The chain runs to 729 residues: Fatty acid oxidation complex subunit alpha (729 aa).

The enoyl-CoA hydratase/isomerase stretch occupies residues 1 to 189 (MLYKGDTLYL…KIGLVDGVVK (189 aa)). Asp-296 provides a ligand contact to substrate. Positions 311 to 729 (ETPKQAAVLG…ARPVGDLKTA (419 aa)) are 3-hydroxyacyl-CoA dehydrogenase. Residues Met-324, Asp-343, 400 to 402 (VVE), Lys-407, and Ser-429 each bind NAD(+). His-450 functions as the For 3-hydroxyacyl-CoA dehydrogenase activity in the catalytic mechanism. Asn-453 lines the NAD(+) pocket. Substrate is bound by residues Asn-500 and Tyr-660. The segment at 708–729 (RHNEPYYPPVEPARPVGDLKTA) is disordered.

The protein in the N-terminal section; belongs to the enoyl-CoA hydratase/isomerase family. It in the C-terminal section; belongs to the 3-hydroxyacyl-CoA dehydrogenase family. Heterotetramer of two alpha chains (FadB) and two beta chains (FadA).

The catalysed reaction is a (3S)-3-hydroxyacyl-CoA + NAD(+) = a 3-oxoacyl-CoA + NADH + H(+). The enzyme catalyses a (3S)-3-hydroxyacyl-CoA = a (2E)-enoyl-CoA + H2O. It catalyses the reaction a 4-saturated-(3S)-3-hydroxyacyl-CoA = a (3E)-enoyl-CoA + H2O. It carries out the reaction (3S)-3-hydroxybutanoyl-CoA = (3R)-3-hydroxybutanoyl-CoA. The catalysed reaction is a (3Z)-enoyl-CoA = a 4-saturated (2E)-enoyl-CoA. The enzyme catalyses a (3E)-enoyl-CoA = a 4-saturated (2E)-enoyl-CoA. Its pathway is lipid metabolism; fatty acid beta-oxidation. Involved in the aerobic and anaerobic degradation of long-chain fatty acids via beta-oxidation cycle. Catalyzes the formation of 3-oxoacyl-CoA from enoyl-CoA via L-3-hydroxyacyl-CoA. It can also use D-3-hydroxyacyl-CoA and cis-3-enoyl-CoA as substrate. The sequence is that of Fatty acid oxidation complex subunit alpha from Escherichia coli (strain K12 / MC4100 / BW2952).